The chain runs to 817 residues: Neurabin-2 (817 aa).

Actin-binding stretches follow at residues 1–154 (MMKT…FERS) and 164–283 (EAAA…QHRV). Residues 1 to 165 (MMKTEPRGPG…PAAAGGDKEA (165 aa)) form a disordered region. Phosphoserine occurs at positions 15 and 17. Over residues 44–58 (GAHHKKYGSNVHRIK) the composition is skewed to basic residues. Phosphoserine occurs at positions 94, 100, and 116. The interval 100-371 (SLNENVDHSA…PERGVGNGRA (272 aa)) is interaction with D(2) dopamine receptor. A compositionally biased stretch (pro residues) spans 131–141 (SAQPAPPPHPP). Positions 169–255 (RLLRQERAGL…KRSRVFQPPP (87 aa)) are interaction with ADRA2A, ADRA2B and ADRA2C. At Ser-192 the chain carries Phosphoserine. Thr-193 carries the post-translational modification Phosphothreonine. Phosphoserine is present on Ser-205. Thr-207 carries the post-translational modification Phosphothreonine. The interval 216-447 (EKADSRTGLH…SEEEDPAPSR (232 aa)) is disordered. Residues 252–261 (QPPPPPPPAP) are compositionally biased toward pro residues. Over residues 291 to 302 (KPREVRKIKPVE) the composition is skewed to basic and acidic residues. Over residues 333-342 (STVATAASPA) the composition is skewed to low complexity. Over residues 344–356 (EEPKAQAAPEKEA) the composition is skewed to basic and acidic residues. Positions 410–425 (LEEDDEDDEEDGEPPY) are enriched in acidic residues. The interaction with protein phosphatase 1 stretch occupies residues 417-494 (DEEDGEPPYE…LEKRVERLEL (78 aa)). Phosphoserine is present on Ser-438. The PP1-binding motif motif lies at 447–451 (RKIHF). The interval 480 to 525 (SAEYELEKRVERLELFPVELEKDSEGLGISIIGMGAGADMGLEKLG) is interaction with RGS2. One can recognise a PDZ domain in the interval 496 to 584 (PVELEKDSEG…RVRFMIGRER (89 aa)). Positions 595–816 (IQQTLEQERW…NLQTLRNSNS (222 aa)) are interaction with TGN38. Ser-658 carries the phosphoserine modification. A coiled-coil region spans residues 671 to 788 (FKELQIKHAV…QRRVLEESEL (118 aa)).

Interacts with DCLK2. Possibly exists as a homodimer, homotrimer or a homotetramer. Interacts with F-actin, PPP1CA, neurabin-1, TGN38 and D(2) dopamine receptor. Interacts with RGS1, RGS2, RGS4, RGS19 and ADRA1B, ADRA2A, ADRA2B, ADRA2C, CDKN2A, PPP1R2, RASGFR1 and TIAM1. Interacts (via C-terminus) with SPATA13 (via C-terminal tail). Interacts with ADRA2B. In terms of processing, stimulation of D1 (but not D2) dopamine receptors induces Ser-94 phosphorylation. Dephosphorylation of Ser-94 is mediated mainly by PP1 and to a lesser extent by PP2A. Phosphorylation of spinophilin disrupts its association with F-actin, but does not affect its binding to PP1.

It localises to the cytoplasm. It is found in the cytoskeleton. Its subcellular location is the nucleus. The protein localises to the cell projection. The protein resides in the dendritic spine. It localises to the postsynaptic density. It is found in the synapse. Its subcellular location is the cell junction. The protein localises to the adherens junction. The protein resides in the cell membrane. It localises to the lamellipodium. It is found in the filopodium. Its subcellular location is the ruffle membrane. Its function is as follows. Seems to act as a scaffold protein in multiple signaling pathways. Modulates excitatory synaptic transmission and dendritic spine morphology. Binds to actin filaments (F-actin) and shows cross-linking activity. Binds along the sides of the F-actin. May play an important role in linking the actin cytoskeleton to the plasma membrane at the synaptic junction. Believed to target protein phosphatase 1/PP1 to dendritic spines, which are rich in F-actin, and regulates its specificity toward ion channels and other substrates, such as AMPA-type and NMDA-type glutamate receptors. Plays a role in regulation of G-protein coupled receptor signaling, including dopamine D2 receptors and alpha-adrenergic receptors. May establish a signaling complex for dopaminergic neurotransmission through D2 receptors by linking receptors downstream signaling molecules and the actin cytoskeleton. Binds to ADRA1B and RGS2 and mediates regulation of ADRA1B signaling. May confer to Rac signaling specificity by binding to both, RacGEFs and Rac effector proteins. Probably regulates p70 S6 kinase activity by forming a complex with TIAM1. Required for hepatocyte growth factor (HGF)-induced cell migration. This chain is Neurabin-2 (PPP1R9B), found in Homo sapiens (Human).